Consider the following 277-residue polypeptide: Phosphoenolpyruvate synthase regulatory protein (277 aa).

Residue 157 to 164 participates in ADP binding; the sequence is GVSRCGKT.

This sequence belongs to the pyruvate, phosphate/water dikinase regulatory protein family. PSRP subfamily.

The catalysed reaction is [pyruvate, water dikinase] + ADP = [pyruvate, water dikinase]-phosphate + AMP + H(+). It carries out the reaction [pyruvate, water dikinase]-phosphate + phosphate + H(+) = [pyruvate, water dikinase] + diphosphate. Bifunctional serine/threonine kinase and phosphorylase involved in the regulation of the phosphoenolpyruvate synthase (PEPS) by catalyzing its phosphorylation/dephosphorylation. The protein is Phosphoenolpyruvate synthase regulatory protein of Escherichia coli O7:K1 (strain IAI39 / ExPEC).